The following is a 199-amino-acid chain: Protein MA_3591 (199 aa).

One can recognise an AMMECR1 domain in the interval T5–E196.

This Methanosarcina acetivorans (strain ATCC 35395 / DSM 2834 / JCM 12185 / C2A) protein is Protein MA_3591.